A 267-amino-acid polypeptide reads, in one-letter code: Glucosamine-6-phosphate deaminase (267 aa).

D76 serves as the catalytic Proton acceptor; for enolization step. D145 serves as the catalytic For ring-opening step. The active-site Proton acceptor; for ring-opening step is H147. E152 (for ring-opening step) is an active-site residue.

Belongs to the glucosamine/galactosamine-6-phosphate isomerase family. In terms of assembly, homohexamer.

Its subcellular location is the cytoplasm. It carries out the reaction alpha-D-glucosamine 6-phosphate + H2O = beta-D-fructose 6-phosphate + NH4(+). It functions in the pathway nucleotide-sugar biosynthesis; UDP-N-acetyl-alpha-D-glucosamine biosynthesis; alpha-D-glucosamine 6-phosphate from D-fructose 6-phosphate: step 1/1. Functionally, catalyzes the reversible conversion of alpha-D-glucosamine 6-phosphate (GlcN-6P) into beta-D-fructose 6-phosphate (Fru-6P) and ammonium ion, a regulatory reaction step in de novo uridine diphosphate-N-acetyl-alpha-D-glucosamine (UDP-GlcNAc) biosynthesis via hexosamine pathway. This Dictyostelium discoideum (Social amoeba) protein is Glucosamine-6-phosphate deaminase.